The primary structure comprises 354 residues: MKYMRHFLDFYHHKNTSEIMLLVFCAAVPGICTEIYYFGFGVLFQILLSVFFSVSFEFLVKRLRKQTVKSLFSDNSAAVTGVLIGISLPSLSPWWLSFFGAFFSIVIAKQIYGGLGNNIFNPAMTGYSILLVSFPILMTNWSFQNSSYFNLFDLNNTFSVIFCTDINHYYSLIDEFQMMYKFITQATPLEQIRTHVLDFNNKIDNIFEFVNYNYYFKNWKWISINISFLIGGIVLLGFNVICWRIPVSILFSLYVFFALDYYFFKKSMYYPIMQLFFGSTMFSVFFIATDPVTTSITKIGRIVFGCIVGFLIWLIRSFGNYPDAIAFSILLSNSIVPLIDHYTQPRVYGYVKKK.

The next 4 helical transmembrane spans lie at 19 to 39, 40 to 60, 77 to 99, and 119 to 139; these read IMLLVFCAAVPGICTEIYYFG, FGVLFQILLSVFFSVSFEFLV, AAVTGVLIGISLPSLSPWWLSFF, and IFNPAMTGYSILLVSFPILMT. T187 carries the post-translational modification FMN phosphoryl threonine. The next 5 membrane-spanning stretches (helical) occupy residues 221 to 241, 245 to 265, 268 to 288, 295 to 315, and 319 to 339; these read WISINISFLIGGIVLLGFNVI, IPVSILFSLYVFFALDYYFFK, MYYPIMQLFFGSTMFSVFFIA, SITKIGRIVFGCIVGFLIWLI, and GNYPDAIAFSILLSNSIVPLI.

The protein belongs to the NqrB/RnfD family. In terms of assembly, the complex is composed of six subunits: RnfA, RnfB, RnfC, RnfD, RnfE and RnfG. Requires FMN as cofactor.

It localises to the cell inner membrane. Functionally, part of a membrane-bound complex that couples electron transfer with translocation of ions across the membrane. This chain is Ion-translocating oxidoreductase complex subunit D, found in Buchnera aphidicola subsp. Baizongia pistaciae (strain Bp).